We begin with the raw amino-acid sequence, 182 residues long: Ribulose bisphosphate carboxylase small subunit, chloroplastic (182 aa).

Residues 1–58 constitute a chloroplast transit peptide; the sequence is MASSMLSTATVASINRVSPAQATMVAPFTGLKSTPVFPTTRKTNSDITSITSNGGKVQ.

Belongs to the RuBisCO small chain family. In terms of assembly, heterohexadecamer of 8 large and 8 small subunits.

It localises to the plastid. The protein resides in the chloroplast. Its function is as follows. RuBisCO catalyzes two reactions: the carboxylation of D-ribulose 1,5-bisphosphate, the primary event in carbon dioxide fixation, as well as the oxidative fragmentation of the pentose substrate. Both reactions occur simultaneously and in competition at the same active site. Although the small subunit is not catalytic it is essential for maximal activity. This chain is Ribulose bisphosphate carboxylase small subunit, chloroplastic, found in Manihot esculenta (Cassava).